The sequence spans 505 residues: Exodeoxyribonuclease 7 large subunit (505 aa).

Positions 466 to 505 (SGDRDAVIDGEGGPAPAPTAPAPKPRPKPAAPPAGQGDLF) are disordered. Over residues 480–497 (APAPTAPAPKPRPKPAAP) the composition is skewed to pro residues.

It belongs to the XseA family. As to quaternary structure, heterooligomer composed of large and small subunits.

The protein resides in the cytoplasm. The enzyme catalyses Exonucleolytic cleavage in either 5'- to 3'- or 3'- to 5'-direction to yield nucleoside 5'-phosphates.. Functionally, bidirectionally degrades single-stranded DNA into large acid-insoluble oligonucleotides, which are then degraded further into small acid-soluble oligonucleotides. This chain is Exodeoxyribonuclease 7 large subunit, found in Caulobacter vibrioides (strain NA1000 / CB15N) (Caulobacter crescentus).